Consider the following 51-residue polypeptide: Insulin (51 aa).

3 disulfide bridges follow: C8-C37, C20-C50, and C36-C41.

Belongs to the insulin family. As to quaternary structure, heterodimer of a B chain and an A chain linked by two disulfide bonds.

The protein localises to the secreted. Insulin decreases blood glucose concentration. It increases cell permeability to monosaccharides, amino acids and fatty acids. It accelerates glycolysis, the pentose phosphate cycle, and glycogen synthesis in liver. The chain is Insulin from Seriola quinqueradiata (Five-ray yellowtail).